The chain runs to 148 residues: Small ribosomal subunit protein bS6 (148 aa).

The interval 96-148 (HEEGQSAMLTRRDDRRERDGDDRPRRREGGFDRGDRGDRGPRRPRDNEAGEGA) is disordered.

It belongs to the bacterial ribosomal protein bS6 family.

Its function is as follows. Binds together with bS18 to 16S ribosomal RNA. In Brucella abortus biovar 1 (strain 9-941), this protein is Small ribosomal subunit protein bS6.